Reading from the N-terminus, the 595-residue chain is Wee1-like protein kinase 1-B (595 aa).

The span at 1-17 shows a compositional bias: polar residues; it reads MNVQPRNMNVQPRNMNV. The disordered stretch occupies residues 1–127; that stretch reads MNVQPRNMNV…CPGTPPHKTF (127 aa). Residues 111–122 are compositionally biased toward pro residues; it reads PTSPIPECPGTP. T186 is subject to Phosphothreonine; by cdk1. One can recognise a Protein kinase domain in the interval 248 to 518; the sequence is FHELEKIGSG…SVALVKHSVL (271 aa). ATP-binding positions include 254 to 262 and K277; that span reads IGSGEFGSV. D375 (proton acceptor) is an active-site residue. Residues N380 and D412 each contribute to the Mg(2+) site. Positions 526 to 563 form a coiled coil; it reads AEQLRIELDAEKFKNALLQKELKKAQIAKAAAEERAHF.

It belongs to the protein kinase superfamily. Ser/Thr protein kinase family. WEE1 subfamily. Interacts (when phosphorylated at Thr-186) with pin1. In terms of processing, phosphorylation at Thr-186 during M-phase by cdk1 inhibits the kinase activity and leads to interaction with pin1. As to expression, zygotically expressed. Present in oocytes and postgastrula embryos (at least until the tailbud stage). Expression begins at the midblastula stage and increases after the early gastrula stage.

Its subcellular location is the nucleus. It catalyses the reaction L-tyrosyl-[protein] + ATP = O-phospho-L-tyrosyl-[protein] + ADP + H(+). Acts as a zygotic negative regulator of entry into mitosis (G2 to M transition) by protecting the nucleus from cytoplasmically activated cyclin B1-complexed cdk1 before the onset of mitosis by mediating phosphorylation of cdk1 on 'Tyr-15'. Specifically phosphorylates and inactivates cyclin B1-complexed cdk1 reaching a maximum during G2 phase and a minimum as cells enter M phase. Phosphorylation of cyclin B1-cdk1 occurs exclusively on 'Tyr-15' and phosphorylation of monomeric cdk1 does not occur. This chain is Wee1-like protein kinase 1-B (wee1-b), found in Xenopus laevis (African clawed frog).